A 148-amino-acid chain; its full sequence is MTPGERSLIQRALKTLDRHLHEPGVAFTSTRAAREWLILNMAGLEREEFRVLYLNNQNQLIAGETLFTGTINRTEVHPREVIKRALYHNAAAVVLAHNHPSGEVTPSKADRLITERLVQALGLVDIRVPDHLIVGGNQVFSFAEHGLL.

Residues 26-148 (AFTSTRAARE…VFSFAEHGLL (123 aa)) enclose the MPN domain. Zn(2+) contacts are provided by histidine 97, histidine 99, and aspartate 110. Residues 97-110 (HNHPSGEVTPSKAD) carry the JAMM motif motif.

This sequence belongs to the UPF0758 family.

The protein is UPF0758 protein YeeS (yeeS) of Escherichia coli (strain K12).